We begin with the raw amino-acid sequence, 584 residues long: Myo-inositol transporter 1 (584 aa).

Over 1 to 81 (MGIHIPYLTS…TSVMITFNQS (81 aa)) the chain is Cytoplasmic. Residue T12 is modified to Phosphothreonine. The segment at 13-42 (SQSNVGDAVGNADSVEFNSEHDSPSKRGKI) is disordered. S26, S31, S35, S37, and S46 each carry phosphoserine. Residues 30-42 (NSEHDSPSKRGKI) are compositionally biased toward basic and acidic residues. The helical transmembrane segment at 82-102 (LSPFIITLTFVASISGFMFGY) threads the bilayer. Residues 103 to 129 (DTGYISSALISIGTDLDHKVLTYGEKE) are Extracellular-facing. Residues 130-150 (IVTAATSLGALITSIFAGTAA) form a helical membrane-spanning segment. Topologically, residues 151–163 (DIFGRKRCLMGSN) are cytoplasmic. A helical membrane pass occupies residues 164–184 (LMFVIGAILQVSAHTFWQMAV). Residues 185–186 (GR) lie on the Extracellular side of the membrane. A helical membrane pass occupies residues 187-207 (LIMGFGVGIGSLIAPLFISEI). Residues 208-215 (APKMIRGR) lie on the Cytoplasmic side of the membrane. Residues 216-236 (LTVINSLWLTGGQLVAYGCGA) form a helical membrane-spanning segment. At 237-246 (GLNYVNNGWR) the chain is on the extracellular side. The chain crosses the membrane as a helical span at residues 247–267 (ILVGLSLIPTAVQFTCLCFLP). Residues 268–349 (DTPRYYVMKG…IGCGLQAIQQ (82 aa)) lie on the Cytoplasmic side of the membrane. A helical membrane pass occupies residues 350–370 (FTGWNSLMYFSGTIFETVGFK). N371 is a glycosylation site (N-linked (GlcNAc...) asparagine). The Extracellular portion of the chain corresponds to 371–376 (NSSAVS). A helical transmembrane segment spans residues 377-397 (IIVSGTNFIFTLVAFFSIDKI). Topologically, residues 398–400 (GRR) are cytoplasmic. Residues 401–421 (TILLIGLPGMTMALVVCSIAF) traverse the membrane as a helical segment. Over 422-441 (HFLGIKFDGAVAVVVSSGFS) the chain is Extracellular. The chain crosses the membrane as a helical span at residues 442–462 (SWGIVIIVFIIVFAAFYALGI). Residues 463–486 (GTVPWQQSELFPQNVRGIGTSYAT) are Cytoplasmic-facing. The chain crosses the membrane as a helical span at residues 487–507 (ATNWAGSLVIASTFLTMLQNI). Topologically, residues 508–510 (TPA) are extracellular. A helical transmembrane segment spans residues 511–531 (GTFAFFAGLSCLSTIFCYFCY). The Cytoplasmic segment spans residues 532–584 (PELSGLELEEVQTILKDGFNIKASKALAKKRKQQVARVHELKYEPTQEIIEDI). A Glycyl lysine isopeptide (Lys-Gly) (interchain with G-Cter in ubiquitin) cross-link involves residue K573.

This sequence belongs to the major facilitator superfamily. Sugar transporter (TC 2.A.1.1) family.

It is found in the cell membrane. It carries out the reaction myo-inositol(out) + H(+)(out) = myo-inositol(in) + H(+)(in). In terms of biological role, major transporter for myo-inositol. The sequence is that of Myo-inositol transporter 1 (ITR1) from Saccharomyces cerevisiae (strain ATCC 204508 / S288c) (Baker's yeast).